Reading from the N-terminus, the 95-residue chain is Large ribosomal subunit protein bL25 (95 aa).

This sequence belongs to the bacterial ribosomal protein bL25 family. As to quaternary structure, part of the 50S ribosomal subunit; part of the 5S rRNA/L5/L18/L25 subcomplex. Contacts the 5S rRNA. Binds to the 5S rRNA independently of L5 and L18.

This is one of the proteins that binds to the 5S RNA in the ribosome where it forms part of the central protuberance. The sequence is that of Large ribosomal subunit protein bL25 from Actinobacillus pleuropneumoniae serotype 5b (strain L20).